The primary structure comprises 406 residues: Phosphopentomutase (406 aa).

The Mn(2+) site is built by aspartate 10, aspartate 305, histidine 310, aspartate 346, histidine 347, and histidine 358.

This sequence belongs to the phosphopentomutase family. The cofactor is Mn(2+).

It is found in the cytoplasm. It carries out the reaction 2-deoxy-alpha-D-ribose 1-phosphate = 2-deoxy-D-ribose 5-phosphate. The catalysed reaction is alpha-D-ribose 1-phosphate = D-ribose 5-phosphate. The protein operates within carbohydrate degradation; 2-deoxy-D-ribose 1-phosphate degradation; D-glyceraldehyde 3-phosphate and acetaldehyde from 2-deoxy-alpha-D-ribose 1-phosphate: step 1/2. In terms of biological role, isomerase that catalyzes the conversion of deoxy-ribose 1-phosphate (dRib-1-P) and ribose 1-phosphate (Rib-1-P) to deoxy-ribose 5-phosphate (dRib-5-P) and ribose 5-phosphate (Rib-5-P), respectively. The sequence is that of Phosphopentomutase from Photobacterium profundum (strain SS9).